The following is a 300-amino-acid chain: U6 snRNA methylphosphate capping enzyme Amus (300 aa).

Residues 1–12 (MDLENNNNTPLT) show a composition bias toward polar residues. 2 disordered regions span residues 1-21 (MDLE…KCAK) and 34-68 (VESK…GKPM). Positions 34–44 (VESKRLKKEES) are enriched in basic and acidic residues. In terms of domain architecture, Bin3-type SAM spans 95 to 300 (DIRLDVLGTQ…KRPIQIFTKS (206 aa)). S-adenosyl-L-methionine is bound by residues Asn-119 and Asp-140.

The protein belongs to the methyltransferase superfamily.

It is found in the nucleus. Its function is as follows. Probable S-adenosyl-L-methionine-dependent methyltransferase that binds and stabilizes U6 snRNA, probably by adding a methylphosphate cap at its 5'-end. Required for U6 stability, but not stability of 7SK snRNAs, other miRNAs or tRNAs. U6 stabilization is required for efficient pre-mRNA splicing. Essential for organismal and germline development. This chain is U6 snRNA methylphosphate capping enzyme Amus, found in Drosophila melanogaster (Fruit fly).